Here is a 448-residue protein sequence, read N- to C-terminus: Putative RNA-ligase (448 aa).

The protein belongs to the asfivirus M448R family.

The protein localises to the virion. The chain is Putative RNA-ligase from African swine fever virus (isolate Pig/Kenya/KEN-50/1950) (ASFV).